The chain runs to 364 residues: Glycerol dehydrogenase (364 aa).

NAD(+)-binding residues include Asp37, Gly92, Lys93, Thr114, and Ser117. Position 119 (Asp119) interacts with glycerol. Residues Ser123, Leu125, and Tyr129 each contribute to the NAD(+) site. Residues Asp169, His252, and His269 each coordinate glycerol. Zn(2+)-binding residues include Asp169, His252, and His269.

It belongs to the iron-containing alcohol dehydrogenase family. Requires Zn(2+) as cofactor.

The enzyme catalyses glycerol + NAD(+) = dihydroxyacetone + NADH + H(+). Its pathway is polyol metabolism; glycerol fermentation; glycerone phosphate from glycerol (oxidative route): step 1/2. Functionally, catalyzes the NAD-dependent oxidation of glycerol to dihydroxyacetone (glycerone). This Thermotoga maritima (strain ATCC 43589 / DSM 3109 / JCM 10099 / NBRC 100826 / MSB8) protein is Glycerol dehydrogenase (gldA).